We begin with the raw amino-acid sequence, 100 residues long: Small ribosomal subunit protein uS14c (100 aa).

Belongs to the universal ribosomal protein uS14 family. In terms of assembly, part of the 30S ribosomal subunit.

The protein localises to the plastid. It is found in the chloroplast. In terms of biological role, binds 16S rRNA, required for the assembly of 30S particles. The sequence is that of Small ribosomal subunit protein uS14c from Eucalyptus globulus subsp. globulus (Tasmanian blue gum).